The chain runs to 288 residues: Lysosomal thioesterase PPT2-B (288 aa).

An N-terminal signal peptide occupies residues 1-20 (MRGYLLLLPLLLCLVDNSVS). A disulfide bridge links Cys-95 with Cys-103. Ser-97 serves as the catalytic Nucleophile. Asn-143 carries an N-linked (GlcNAc...) asparagine glycan. Cys-151 and Cys-162 form a disulfide bridge. N-linked (GlcNAc...) asparagine glycosylation is present at Asn-192. Residues Asp-214 and His-269 contribute to the active site. Asn-275 carries N-linked (GlcNAc...) asparagine glycosylation.

Belongs to the palmitoyl-protein thioesterase family.

It localises to the lysosome. It catalyses the reaction hexadecanoyl-CoA + H2O = hexadecanoate + CoA + H(+). The enzyme catalyses S-hexadecanoyl-N-acetylcysteamine + H2O = N-acetylcysteamine + hexadecanoate + H(+). Its function is as follows. Catalyzes the cleavage of thioester bonds from S-palmitoyl-CoA or S-palmitoyl-N-acetylcysteamine (unbranched structures) but does not have activity against palmitoylcysteine or palmitoylated proteins, branched structures or bulky head groups. Conversely, hydrolyzes both long and short chain fatty acyl-CoA substrate. The polypeptide is Lysosomal thioesterase PPT2-B (ppt2-b) (Xenopus laevis (African clawed frog)).